The following is a 197-amino-acid chain: Phosphoheptose isomerase (197 aa).

Positions 34–196 (MVNCLLGGNK…DRTLFPQDEQ (163 aa)) constitute an SIS domain. A substrate-binding site is contributed by 49–51 (NGG). Zn(2+)-binding residues include histidine 58 and glutamate 62. Residues glutamate 62, 91-92 (ND), 117-119 (STS), serine 122, and glutamine 172 contribute to the substrate site. Zn(2+) is bound by residues glutamine 172 and histidine 180.

The protein belongs to the SIS family. GmhA subfamily. Homotetramer. The cofactor is Zn(2+).

It is found in the cytoplasm. The catalysed reaction is 2 D-sedoheptulose 7-phosphate = D-glycero-alpha-D-manno-heptose 7-phosphate + D-glycero-beta-D-manno-heptose 7-phosphate. Its pathway is carbohydrate biosynthesis; D-glycero-D-manno-heptose 7-phosphate biosynthesis; D-glycero-alpha-D-manno-heptose 7-phosphate and D-glycero-beta-D-manno-heptose 7-phosphate from sedoheptulose 7-phosphate: step 1/1. Its function is as follows. Catalyzes the isomerization of sedoheptulose 7-phosphate in D-glycero-D-manno-heptose 7-phosphate. The sequence is that of Phosphoheptose isomerase from Shewanella pealeana (strain ATCC 700345 / ANG-SQ1).